The following is a 147-amino-acid chain: Ponticulin-like protein C2 (147 aa).

The signal sequence occupies residues 1 to 20; the sequence is MKFTKPLLLLIVAIIASSNA. Residue asparagine 118 is the site of GPI-like-anchor amidated asparagine attachment. Residue asparagine 118 is glycosylated (N-linked (GlcNAc...) asparagine). Positions 119–147 are cleaved as a propeptide — removed in mature form; sequence SSESDSSDSTRIGASFALFALALLSMLAL.

Belongs to the ponticulin family. Post-translationally, the GPI-like-anchor contains a phosphoceramide group, rather than a phosphatidyl group.

The protein resides in the cell membrane. The chain is Ponticulin-like protein C2 (ponC2) from Dictyostelium discoideum (Social amoeba).